The following is a 540-amino-acid chain: SNW/SKI-interacting protein B (540 aa).

4 disordered regions span residues 1–106 (MVLR…SLTV), 215–273 (GETQ…NPKG), 351–402 (GAAP…RDRD), and 502–526 (ASVAAGKRERPVEFDGPEMEEDPFH). Basic and acidic residues-rich tracts occupy residues 16-29 (PHDHTEDEWFKERY) and 83-94 (MGRRGGDGDGEQ). The interval 189–353 (PEFIKYTPAR…KARAEMLGAA (165 aa)) is SNW. Pro residues predominate over residues 236-251 (AGSPPVPVLRSPPRPP). The segment covering 359–382 (ERSKAAAERDAIREERRRERRLEA) has biased composition (basic and acidic residues). The span at 383–393 (RAAAAAASKKS) shows a compositional bias: low complexity.

The protein belongs to the SNW family.

Its subcellular location is the nucleus. The chain is SNW/SKI-interacting protein B from Oryza sativa subsp. japonica (Rice).